The following is a 1196-amino-acid chain: METKPKTATTIKVPPGPLGYVYARACPSEGIELLALLSARSGDADVAVAPLVVGLTVESGFEANVAVVVGSRTTGLGGTAVSLKLTPSHYSSSVYVFHGGRHLDPSTQAPNLTRLCERARRHFGFSDYTPRPGDLKHETTGEALCERLGLDPDRALLYLVVTEGFKEAVCINNTFLHLGGSDKVTIGGAEVHRIPVYPLQLFMPDFSRVIAEPFNANHRSIGENFTYPLPFFNRPLNRLLFEAVVGPAAVALRCRNVDAVARAAAHLAFDENHEGAALPADITFTAFEASQGKTPRGGRDGGGKGPAGGFEQRLASVMAGDAALALESIVSMAVFDEPPTDISAWPLCEGQDTAAARANAVGAYLARAAGLVGAMVFSTNSALHLTEVDDAGPADPKDHSKPSFYRFFLVPGTHVAANPQVDREGHVVPGFEGRPTAPLVGGTQEFAGEHLAMLCGFSPALLAKMLFYLERCDGGVIVGRQEMDVFRYVADSNQTDVPCNLCTFDTRHACVHTTLMRLRARHPKFASAARGAIGVFGTMNSMYSDCDVLGNYAAFSALKRADGSETARTIMQETYRAATERVMAELETLQYVDQAVPTAMGRLETIITNREALHTVVNNVRQVVDREVEQLMRNLVEGRNFKFRDGLGEANHAMSLTLDPYACGPCPLLQLLGRRSNLAVYQDLALSQCHGVFAGQSVEGRNFRNQFQPVLRRRVMDMFNNGFLSAKTLTVALSEGAAICAPSLTAGQTAPAESSFEGDVARVTLGFPKELRVKSRVLFAGASANASEAAKARVASLQSAYQKPDKRVDILLGPLGFLLKQFHAAIFPNGKPPGSNQPNPQWFWTALQRNQLPARLLSREDIETIAFIKKFSLDYGAINFINLAPNNVSELAMYYMANQILRYCDHSTYFINTLTAIIAGSRRPPSVQAAAAWSAQGGAGLEAGARALMDAVDAHPGAWTSMFASCNLLRPVMAARPMVVLGLSISKYYGMAGNDRVFQAGNWASLMGGKNACPLLIFDRTRKFVLACPRAGFVCAASNLGGGAHESSLCEQLRGIISEGGAAVASSVFVATVKSLGPRTQQLQIEDWLALLEDEYLSEEMMELTARALERGNGEWSTDAALEVAHEAEALVSQLGNAGEVFNFGDFGCEDDNATPFGGPGAPGPAFAGRKRAFHGDDPFGEGPPDKKGDLTLDML.

A zinc finger spans residues 499-512 (CNLCTFDTRHACVH). 2 short sequence motifs (required for filament formation) span residues 843–844 (FW) and 1142–1144 (FNF). The segment at 1158–1196 (GGPGAPGPAFAGRKRAFHGDDPFGEGPPDKKGDLTLDML) is disordered. A required for nuclear localization region spans residues 1170–1196 (RKRAFHGDDPFGEGPPDKKGDLTLDML). Residues 1174–1196 (FHGDDPFGEGPPDKKGDLTLDML) show a composition bias toward basic and acidic residues.

It belongs to the herpesviridae major DNA-binding protein family. Homooligomers. Forms double-helical filaments necessary for the formation of replication compartments within the host nucleus. Interacts with the origin-binding protein. Interacts with the helicase primase complex; this interaction stimulates primer synthesis activity of the helicase-primase complex. Interacts with the DNA polymerase. Interacts with the alkaline exonuclease; this interaction increases its nuclease processivity.

The protein localises to the host nucleus. Functionally, plays several crucial roles in viral infection. Participates in the opening of the viral DNA origin to initiate replication by interacting with the origin-binding protein. May disrupt loops, hairpins and other secondary structures present on ssDNA to reduce and eliminate pausing of viral DNA polymerase at specific sites during elongation. Promotes viral DNA recombination by performing strand-transfer, characterized by the ability to transfer a DNA strand from a linear duplex to a complementary single-stranded DNA circle. Can also catalyze the renaturation of complementary single strands. Additionally, reorganizes the host cell nucleus, leading to the formation of prereplicative sites and replication compartments. This process is driven by the protein which can form double-helical filaments in the absence of DNA. This chain is Major DNA-binding protein, found in Human herpesvirus 1 (strain KOS) (HHV-1).